Reading from the N-terminus, the 376-residue chain is Crh-like protein 4 (376 aa).

The first 21 residues, 1–21 (MFPKIFLTAATALLSAKSTFA), serve as a signal peptide directing secretion. The region spanning 22–229 (QTYSSCNPLF…WARGPTDYSN (208 aa)) is the GH16 domain. A disulfide bridge connects residues C27 and C35. E119 acts as the Nucleophile in catalysis. E123 serves as the catalytic Proton donor. 4 residues coordinate chitin: E123, K202, W206, and T217. The GPI-anchor amidated serine moiety is linked to residue S346. Residues 347 to 376 (ASPINISRINPLLLCGPFTFFFFAAIRRWP) constitute a propeptide, removed in mature form. An N-linked (GlcNAc...) asparagine glycan is attached at N351.

Belongs to the glycosyl hydrolase 16 family. CRH1 subfamily.

Its subcellular location is the cell membrane. It carries out the reaction Random endo-hydrolysis of N-acetyl-beta-D-glucosaminide (1-&gt;4)-beta-linkages in chitin and chitodextrins.. Functionally, dual chitinase/transglycosylase that plays a role in cell wall architecture. Chitinase and transglycosylase activities are coupled. Required for the polysaccharide cross-linking at the septa and the cell wall. More specifically, transfers chitin to 1,6-beta-glucan in the cell wall. The sequence is that of Crh-like protein 4 from Botryotinia fuckeliana (strain B05.10) (Noble rot fungus).